Reading from the N-terminus, the 157-residue chain is MTPLARFRKVVVGGTFDRLHLGHQRLLSVALELGDRVVIGVTTDSFVREEGKKGVEPFEERVRAVRRFVEEKGASDRVEIVPLEDRYGTTLEDDEMDAIVVSPETEPVALEINELRRKRGFPPLSIVVIPFVLDGDGRKISSSRLRGEVDEGPCRDD.

This sequence belongs to the eukaryotic CoaD family.

The protein localises to the cytoplasm. The enzyme catalyses (R)-4'-phosphopantetheine + ATP + H(+) = 3'-dephospho-CoA + diphosphate. The protein operates within cofactor biosynthesis; coenzyme A biosynthesis. Its function is as follows. Reversibly transfers an adenylyl group from ATP to 4'-phosphopantetheine, yielding dephospho-CoA (dPCoA) and pyrophosphate. This is Phosphopantetheine adenylyltransferase from Methanopyrus kandleri (strain AV19 / DSM 6324 / JCM 9639 / NBRC 100938).